The sequence spans 219 residues: Probable transcription factor At1g55950 (219 aa).

The tract at residues 9 to 77 (ASHSLKSLMA…DEKMETEEEG (69 aa)) is disordered. Basic residues predominate over residues 17 to 30 (MAKKNKRSQQKNKC). The segment covering 31–48 (LKPEKDPSTVKRLLEDPP) has biased composition (basic and acidic residues). Residues 65-77 (YGDDEKMETEEEG) are compositionally biased toward acidic residues.

This sequence belongs to the GeBP family.

The polypeptide is Probable transcription factor At1g55950 (Arabidopsis thaliana (Mouse-ear cress)).